Consider the following 670-residue polypeptide: Leucine-rich repeat-containing protein 45 (670 aa).

LRR repeat units follow at residues 58-80 (TLCT…LLLR), 87-107 (VLRF…EALG), 115-136 (SIQS…FATF), 145-166 (ALQR…ELAL), 173-194 (TLQQ…ALMN), and 201-212 (TLWRLDLAGNNI). A coiled-coil region spans residues 252–645 (REEKSKQFLD…IARIRDEEAQ (394 aa)). At Ser661 the chain carries Phosphoserine; by NEK2.

In terms of assembly, homomer. Interacts with CROCC/rootletin and CEP250. Interacts with CEP44. Interacts with CCDC102B (via N-terminus). Post-translationally, phosphorylated by NEK2 during misosis, phosphorylation reduces centrosomal localization which subsequently leads to centrosome separation.

The protein localises to the cytoplasm. Its subcellular location is the cytoskeleton. The protein resides in the microtubule organizing center. It localises to the centrosome. In terms of biological role, component of the proteinaceous fiber-like linker between two centrioles, required for centrosome cohesion. In Homo sapiens (Human), this protein is Leucine-rich repeat-containing protein 45 (LRRC45).